Reading from the N-terminus, the 155-residue chain is Endoribonuclease YbeY (155 aa).

3 residues coordinate Zn(2+): His114, His118, and His124.

Belongs to the endoribonuclease YbeY family. Zn(2+) is required as a cofactor.

Its subcellular location is the cytoplasm. Its function is as follows. Single strand-specific metallo-endoribonuclease involved in late-stage 70S ribosome quality control and in maturation of the 3' terminus of the 16S rRNA. The polypeptide is Endoribonuclease YbeY (Erwinia tasmaniensis (strain DSM 17950 / CFBP 7177 / CIP 109463 / NCPPB 4357 / Et1/99)).